The primary structure comprises 436 residues: Protein GOLM2 (436 aa).

An N-acetylmethionine modification is found at methionine 1. Topologically, residues 1–14 (MVGFGANRRAGRLP) are cytoplasmic. Residues 15–35 (SLVLVVLLVVIVVLAFNYWSI) form a helical; Signal-anchor for type II membrane protein membrane-spanning segment. A coiled-coil region spans residues 35 to 195 (ISSRHVLLQE…QFLQEQKQEA (161 aa)). At 36-436 (SSRHVLLQEE…YGKQHFNDVL (401 aa)) the chain is on the lumenal side. Composition is skewed to basic and acidic residues over residues 193 to 207 (QEAH…KELD) and 224 to 247 (VADK…KRGG). Residues 193–436 (QEAHKIQSND…YGKQHFNDVL (244 aa)) form a disordered region. Serine 233 and serine 275 each carry phosphoserine. Composition is skewed to polar residues over residues 275-295 (SVSQ…QPLS) and 305-321 (NHNG…SSPL). Residues serine 328 and serine 332 each carry the phosphoserine modification. Over residues 344–362 (ATKDRVSDFHKLKQSRFFD) the composition is skewed to basic and acidic residues. Phosphoserine is present on serine 366. The segment covering 399–418 (YNEEEDGDGGEEDVQDDEER) has biased composition (acidic residues). Residues 426 to 436 (DYGKQHFNDVL) show a composition bias toward basic and acidic residues.

Belongs to the GOLM family.

The protein localises to the membrane. This chain is Protein GOLM2 (GOLM2), found in Pongo abelii (Sumatran orangutan).